The primary structure comprises 125 residues: Cytochrome c2 (125 aa).

The signal sequence occupies residues 1-21 (MKAIKIAMVGAALVWSASAYA). Positions 23–123 (GDPVKGEQVF…DVIAFLATQH (101 aa)) constitute a Cytochrome c domain. Residues cysteine 35, cysteine 38, histidine 39, and methionine 101 each coordinate heme c.

It belongs to the cytochrome c family. In terms of processing, binds 1 heme c group covalently per subunit.

In terms of biological role, cytochrome c2 is found mainly in purple, non-sulfur, photosynthetic bacteria where it functions as the electron donor to the oxidized bacteriochlorophyll in the photophosphorylation pathway. However, it may also have a role in the respiratory chain and is found in some non-photosynthetic bacteria. The polypeptide is Cytochrome c2 (Rhodomicrobium vannielii (strain ATCC 17100 / DSM 162 / LMG 4299 / NCIMB 10020 / ATH 3.1.1)).